The following is a 46-amino-acid chain: Large ribosomal subunit protein bL36A (46 aa).

It belongs to the bacterial ribosomal protein bL36 family.

The sequence is that of Large ribosomal subunit protein bL36A from Sodalis glossinidius (strain morsitans).